A 396-amino-acid polypeptide reads, in one-letter code: tRNA-specific 2-thiouridylase MnmA (396 aa).

Residues 35 to 42 (GLSGGVDS) and leucine 61 each bind ATP. Cysteine 122 (nucleophile) is an active-site residue. Residues cysteine 122 and cysteine 221 are joined by a disulfide bond. Glycine 147 provides a ligand contact to ATP. Residues 171–173 (KDQ) form an interaction with tRNA region. Cysteine 221 serves as the catalytic Cysteine persulfide intermediate. The tract at residues 326 to 327 (RY) is interaction with tRNA.

Belongs to the MnmA/TRMU family.

Its subcellular location is the cytoplasm. It carries out the reaction S-sulfanyl-L-cysteinyl-[protein] + uridine(34) in tRNA + AH2 + ATP = 2-thiouridine(34) in tRNA + L-cysteinyl-[protein] + A + AMP + diphosphate + H(+). Catalyzes the 2-thiolation of uridine at the wobble position (U34) of tRNA, leading to the formation of s(2)U34. The chain is tRNA-specific 2-thiouridylase MnmA from Parasynechococcus marenigrum (strain WH8102).